Consider the following 176-residue polypeptide: ATP-dependent protease subunit HslV (176 aa).

Thr5 is a catalytic residue. 3 residues coordinate Na(+): Ser161, Cys164, and Thr167.

This sequence belongs to the peptidase T1B family. HslV subfamily. In terms of assembly, a double ring-shaped homohexamer of HslV is capped on each side by a ring-shaped HslU homohexamer. The assembly of the HslU/HslV complex is dependent on binding of ATP.

It is found in the cytoplasm. It catalyses the reaction ATP-dependent cleavage of peptide bonds with broad specificity.. With respect to regulation, allosterically activated by HslU binding. In terms of biological role, protease subunit of a proteasome-like degradation complex believed to be a general protein degrading machinery. The chain is ATP-dependent protease subunit HslV from Desulfitobacterium hafniense (strain DSM 10664 / DCB-2).